Consider the following 179-residue polypeptide: Shikimate kinase (179 aa).

12 to 17 (GVGKSK) is a binding site for ATP. A Mg(2+)-binding site is contributed by Ser16. Substrate is bound by residues Asp34, Arg61, and Gly83. Arg131 serves as a coordination point for ATP. Substrate is bound at residue Arg147.

It belongs to the shikimate kinase family. As to quaternary structure, monomer. Requires Mg(2+) as cofactor.

The protein resides in the cytoplasm. It carries out the reaction shikimate + ATP = 3-phosphoshikimate + ADP + H(+). It functions in the pathway metabolic intermediate biosynthesis; chorismate biosynthesis; chorismate from D-erythrose 4-phosphate and phosphoenolpyruvate: step 5/7. In terms of biological role, catalyzes the specific phosphorylation of the 3-hydroxyl group of shikimic acid using ATP as a cosubstrate. The sequence is that of Shikimate kinase from Leptospira borgpetersenii serovar Hardjo-bovis (strain JB197).